The primary structure comprises 421 residues: Mitochondrial distribution and morphology protein 10 (421 aa).

This sequence belongs to the MDM10 family. Component of the ER-mitochondria encounter structure (ERMES) or MDM complex, composed of MMM1, MDM10, MDM12 and MDM34. Associates with the mitochondrial outer membrane sorting assembly machinery SAM(core) complex.

The protein resides in the mitochondrion outer membrane. In terms of biological role, component of the ERMES/MDM complex, which serves as a molecular tether to connect the endoplasmic reticulum and mitochondria. Components of this complex are involved in the control of mitochondrial shape and protein biogenesis and may function in phospholipid exchange. MDM10 is involved in the late assembly steps of the general translocase of the mitochondrial outer membrane (TOM complex). Functions in the TOM40-specific route of the assembly of outer membrane beta-barrel proteins, including the association of TOM40 with the receptor TOM22 and small TOM proteins. Can associate with the SAM(core) complex as well as the MDM12-MMM1 complex, both involved in late steps of the major beta-barrel assembly pathway, that is responsible for biogenesis of all outer membrane beta-barrel proteins. May act as a switch that shuttles between both complexes and channels precursor proteins into the TOM40-specific pathway. Plays a role in mitochondrial morphology and in the inheritance of mitochondria. In Vanderwaltozyma polyspora (strain ATCC 22028 / DSM 70294 / BCRC 21397 / CBS 2163 / NBRC 10782 / NRRL Y-8283 / UCD 57-17) (Kluyveromyces polysporus), this protein is Mitochondrial distribution and morphology protein 10.